A 624-amino-acid chain; its full sequence is Chaperone protein DnaK (624 aa).

A Phosphothreonine; by autocatalysis modification is found at threonine 174. Disordered regions lie at residues 544–563 and 576–624; these read KKAQ…DDLS and NAQK…DDKK. Over residues 581 to 600 the composition is skewed to low complexity; that stretch reads QQAQGGPASGAATDAGAAQG. The segment covering 601–624 has biased composition (basic and acidic residues); the sequence is SDDKKSDDDTINGDYKDVSDDDKK.

It belongs to the heat shock protein 70 family.

Its function is as follows. Acts as a chaperone. This is Chaperone protein DnaK from Lacticaseibacillus casei (strain BL23) (Lactobacillus casei).